Reading from the N-terminus, the 130-residue chain is Small ribosomal subunit protein uS11 (130 aa).

Belongs to the universal ribosomal protein uS11 family. Part of the 30S ribosomal subunit. Interacts with proteins S7 and S18. Binds to IF-3.

Functionally, located on the platform of the 30S subunit, it bridges several disparate RNA helices of the 16S rRNA. Forms part of the Shine-Dalgarno cleft in the 70S ribosome. The chain is Small ribosomal subunit protein uS11 from Caldanaerobacter subterraneus subsp. tengcongensis (strain DSM 15242 / JCM 11007 / NBRC 100824 / MB4) (Thermoanaerobacter tengcongensis).